A 171-amino-acid chain; its full sequence is Photosystem I assembly protein Ycf3 (171 aa).

TPR repeat units follow at residues 35-68 (AFTY…EIDP), 72-105 (SYIL…NPSL), and 120-153 (GEQA…APNN).

Belongs to the Ycf3 family.

The protein localises to the plastid. It localises to the chloroplast thylakoid membrane. Functionally, essential for the assembly of the photosystem I (PSI) complex. May act as a chaperone-like factor to guide the assembly of the PSI subunits. In Psilotum nudum (Whisk fern), this protein is Photosystem I assembly protein Ycf3.